We begin with the raw amino-acid sequence, 455 residues long: 5'-nucleotidase domain-containing protein 1 (455 aa).

The active-site Nucleophile is the aspartate 16. Residues aspartate 16 and aspartate 18 each contribute to the Mg(2+) site. The active-site Proton donor is aspartate 18. Lysine 171 bears the N6-acetyllysine mark. Aspartate 313 lines the Mg(2+) pocket. Positions 339 to 364 are enriched in basic and acidic residues; sequence GDEGTRSQRPEESEPLEKKGKYEGPK. Residues 339 to 368 are disordered; sequence GDEGTRSQRPEESEPLEKKGKYEGPKAKPL.

Belongs to the 5'(3')-deoxyribonucleotidase family.

The polypeptide is 5'-nucleotidase domain-containing protein 1 (NT5DC1) (Homo sapiens (Human)).